Consider the following 156-residue polypeptide: Small ribosomal subunit protein uS7 (156 aa).

Belongs to the universal ribosomal protein uS7 family. In terms of assembly, part of the 30S ribosomal subunit. Contacts proteins S9 and S11.

Functionally, one of the primary rRNA binding proteins, it binds directly to 16S rRNA where it nucleates assembly of the head domain of the 30S subunit. Is located at the subunit interface close to the decoding center, probably blocks exit of the E-site tRNA. This Campylobacter fetus subsp. fetus (strain 82-40) protein is Small ribosomal subunit protein uS7.